The chain runs to 423 residues: Pre-mRNA-splicing regulator WTAP (423 aa).

The tract at residues 234–423 (QQLSQMNQTQ…TSNASAGSVL (190 aa)) is disordered. Polar residues-rich tracts occupy residues 239–276 (MNQT…SSNV), 285–301 (NGPS…SGSS), 358–377 (DSPT…TDSN), and 392–404 (TAGT…NGLD). The span at 405–423 (SSAAAVATNTSNASAGSVL) shows a compositional bias: low complexity.

This sequence belongs to the fl(2)d family. As to quaternary structure, component of the WMM complex, a N6-methyltransferase complex composed of a catalytic subcomplex, named MAC, and of an associated subcomplex, named MACOM. Component of the MACOM subcomplex.

Its subcellular location is the nucleus speckle. The protein resides in the nucleus. It is found in the nucleoplasm. Its function is as follows. Associated component of the WMM complex, a complex that mediates N6-methyladenosine (m6A) methylation of RNAs, a modification that plays a role in the efficiency of mRNA splicing and RNA processing. This Danio rerio (Zebrafish) protein is Pre-mRNA-splicing regulator WTAP.